The sequence spans 143 residues: Envelope protein A28 homolog (143 aa).

Residues 1–21 (MNTVQILVVILITTALSFLVF) traverse the membrane as a helical; Signal-anchor for type II membrane protein segment. The Virion surface segment spans residues 22-143 (QLWYYAENYE…LLRLLMANTS (122 aa)).

This sequence belongs to the poxviridae A28 protein family. Contains two intramolecular disulfide bonds. They are created by the viral disulfide bond formation pathway, a poxvirus-specific pathway that operates on the cytoplasmic side of the MV membranes.

The protein localises to the virion membrane. Functionally, envelope protein required for virus entry into host cell and for cell-cell fusion (syncytium formation). The chain is Envelope protein A28 homolog from Amsacta (AmEPV).